We begin with the raw amino-acid sequence, 21 residues long: Outer membrane protein P2 (21 aa).

In terms of assembly, disulfide bond interactions within and between MOMP molecules and other components form high molecular-weight oligomers.

The protein localises to the cell outer membrane. Functionally, structural rigidity of the outer membrane of elementary bodies and porin forming, permitting diffusion of solutes through the intracellular reticulate body membrane. Binds carcinoembryonic antigen (CEA). This chain is Outer membrane protein P2, found in Glaesserella parasuis (Haemophilus parasuis).